The primary structure comprises 105 residues: Antitoxin HigA-1 (105 aa).

Positions Leu15 to Trp69 constitute an HTH cro/C1-type domain. Positions Ser27–Asn46 form a DNA-binding region, H-T-H motif.

Functionally, antitoxin component of a type II toxin-antitoxin (TA) system that counteracts the effect of the HigB-1 toxin. Binds to its own promoter and regulates transcription of the higB-1/higA-1 operon. This is Antitoxin HigA-1 (higA-1) from Vibrio cholerae serotype O1 (strain ATCC 39315 / El Tor Inaba N16961).